The following is an 879-amino-acid chain: Metabotropic glutamate receptor 3 (879 aa).

A signal peptide spans 1-22 (MKMLTRLQVLMLALFSKGFLVS). Topologically, residues 23–576 (LGDHNFMRRE…EDYIRWEDAW (554 aa)) are extracellular. Residues C57 and C99 are joined by a disulfide bond. Residues S151 and 172-174 (AST) contribute to the L-glutamate site. The N-linked (GlcNAc...) asparagine glycan is linked to N209. Y222 contributes to the L-glutamate binding site. Cystine bridges form between C240-C527, C361-C373, C412-C419, C509-C528, C513-C531, C534-C546, and C549-C562. N292 carries N-linked (GlcNAc...) asparagine glycosylation. D301 is an L-glutamate binding site. K389 is an L-glutamate binding site. N-linked (GlcNAc...) asparagine glycans are attached at residues N414 and N439. Residues 577–599 (AIGPVTIACLGFMCTCIVITVFI) form a helical membrane-spanning segment. Residues 600–613 (KHNNTPLVKASGRE) are Cytoplasmic-facing. A helical membrane pass occupies residues 614–634 (LCYILLFGVSLSYCMTFFFIA). Over 635 to 645 (KPSPVICALRR) the chain is Extracellular. A helical membrane pass occupies residues 646-664 (LGLGTSFAICYSALLTKTN). Residues 665–688 (CIARIFDGVKNGAQRPKFISPSSQ) are Cytoplasmic-facing. A helical membrane pass occupies residues 689–709 (VFICLGLILVQIVMVSVWLIL). Residues 710-734 (ETPGTRRYTLPEKRETVILKCNVKD) lie on the Extracellular side of the membrane. Residues 735 to 756 (SSMLISLTYDVVLVILCTVYAF) traverse the membrane as a helical segment. Residues 757–769 (KTRKCPENFNEAK) are Cytoplasmic-facing. A helical membrane pass occupies residues 770 to 792 (FIGFTMYTTCIIWLAFLPIFYVT). The Extracellular segment spans residues 793–802 (SSDYRVQTTT). The chain crosses the membrane as a helical span at residues 803-828 (MCISVSLSGFVVLGCLFAPKVHIVLF). Over 829–879 (QPQKNVVTHRLHLNRFSVSGTATTYSQSSASTYVPTVCNGREVLDSTTSSL) the chain is Cytoplasmic.

It belongs to the G-protein coupled receptor 3 family. Interacts with TAMALIN.

Its subcellular location is the cell membrane. Its function is as follows. G-protein coupled receptor for glutamate. Ligand binding causes a conformation change that triggers signaling via guanine nucleotide-binding proteins (G proteins) and modulates the activity of down-stream effectors. Signaling inhibits adenylate cyclase activity. The polypeptide is Metabotropic glutamate receptor 3 (Grm3) (Mus musculus (Mouse)).